An 85-amino-acid chain; its full sequence is UPF0297 protein LGAS_0422 (85 aa).

It belongs to the UPF0297 family.

This chain is UPF0297 protein LGAS_0422, found in Lactobacillus gasseri (strain ATCC 33323 / DSM 20243 / BCRC 14619 / CIP 102991 / JCM 1131 / KCTC 3163 / NCIMB 11718 / NCTC 13722 / AM63).